A 64-amino-acid polypeptide reads, in one-letter code: Large ribosomal subunit protein bL35 (64 aa).

This sequence belongs to the bacterial ribosomal protein bL35 family.

The protein is Large ribosomal subunit protein bL35 of Pseudomonas putida (strain W619).